The following is a 287-amino-acid chain: Probable aquaporin PIP1-5 (287 aa).

N-acetylmethionine is present on methionine 1. A disordered region spans residues 1–34; the sequence is MEGKEEDVNVGANKFPERQPIGTAAQTESKDYKE. Residues 1–55 lie on the Cytoplasmic side of the membrane; sequence MEGKEEDVNVGANKFPERQPIGTAAQTESKDYKEPPPAPFFEPGELKSWSFYRAG. A helical transmembrane segment spans residues 56–76; it reads IAEFIATFLFLYVTVLTVMGV. The Extracellular segment spans residues 77 to 92; the sequence is KRAPNMCASVGIQGIA. Residues 93 to 113 traverse the membrane as a helical segment; it reads WAFGGMIFALVYCTAGISGGH. At 114–133 the chain is on the cytoplasmic side; the sequence is INPAVTFGLFLARKLSLTRA. The NPA 1 motif lies at 115–117; the sequence is NPA. A helical transmembrane segment spans residues 134 to 154; that stretch reads LFYIVMQCLGAICGAGVVKGF. The Extracellular segment spans residues 155 to 175; sequence QPGLYQTNGGGANVVAHGYTK. Residues 176–196 traverse the membrane as a helical segment; the sequence is GSGLGAEIVGTFVLVYTVFSA. Over 197–209 the chain is Cytoplasmic; sequence TDAKRSARDSHVP. A helical membrane pass occupies residues 210-230; the sequence is ILAPLPIGFAVFLVHLATIPI. At 231-257 the chain is on the extracellular side; the sequence is TGTGINPARSLGAAIIYNKDHAWDDHW. The NPA 2 signature appears at 236–238; sequence NPA. The helical transmembrane segment at 258-278 threads the bilayer; that stretch reads IFWVGPFIGAALAALYHQIVI. Residues 279 to 287 lie on the Cytoplasmic side of the membrane; it reads RAIPFKSKT. Residue serine 285 is modified to Phosphoserine.

Belongs to the MIP/aquaporin (TC 1.A.8) family. PIP (TC 1.A.8.11) subfamily. In terms of tissue distribution, predominantly expressed in green siliques. Also expressed above ground, in roots and flower buds.

Its subcellular location is the cell membrane. In terms of biological role, aquaporins facilitate the transport of water and small neutral solutes across cell membranes. This is Probable aquaporin PIP1-5 (PIP1-5) from Arabidopsis thaliana (Mouse-ear cress).